The chain runs to 185 residues: Ribosome-recycling factor (185 aa).

Belongs to the RRF family.

It is found in the cytoplasm. Responsible for the release of ribosomes from messenger RNA at the termination of protein biosynthesis. May increase the efficiency of translation by recycling ribosomes from one round of translation to another. This is Ribosome-recycling factor from Campylobacter jejuni subsp. jejuni serotype O:2 (strain ATCC 700819 / NCTC 11168).